We begin with the raw amino-acid sequence, 85 residues long: Conotoxin Lt28.4 (85 aa).

A signal peptide spans 1-21; the sequence is MPKLEMMLLVLLILPLCYIDA. Positions 22-40 are excised as a propeptide; that stretch reads VGPPPPWNMEDEIIEHWQK.

Belongs to the conotoxin D superfamily. Post-translationally, contains 5 disulfide bonds. In terms of tissue distribution, expressed by the venom duct.

It localises to the secreted. Its function is as follows. Probable neurotoxin. The chain is Conotoxin Lt28.4 from Conus litteratus (Lettered cone).